Here is a 539-residue protein sequence, read N- to C-terminus: Copine-C (539 aa).

C2 domains are found at residues 1–120 (MIPS…KIVA) and 128–251 (VTGK…PLIN). Positions 23, 24, 30, 83, 85, and 98 each coordinate Ca(2+). The VWFA domain maps to 290–507 (SLMTAIDCTG…ALAQETLKEI (218 aa)).

It belongs to the copine family. Ca(2+) is required as a cofactor.

This Dictyostelium discoideum (Social amoeba) protein is Copine-C (cpnC).